Here is an 883-residue protein sequence, read N- to C-terminus: Envelope glycoprotein B (883 aa).

Residues Met1 to Ser31 form the signal peptide. Over Gln32–Pro750 the chain is Virion surface. Disulfide bonds link Cys77–Cys535, Cys94–Cys491, Cys167–Cys229, Cys321–Cys369, and Cys558–Cys608. Asn102 and Asn121 each carry an N-linked (GlcNAc...) asparagine; by host glycan. An involved in fusion and/or binding to host membrane region spans residues Thr134–Arg140. Asn211 carries N-linked (GlcNAc...) asparagine; by host glycosylation. The tract at residues His216–Thr223 is involved in fusion and/or binding to host membrane. N-linked (GlcNAc...) asparagine; by host glycans are attached at residues Asn262 and Asn360. Residues Gln428–Ile457 are disordered. N-linked (GlcNAc...) asparagine; by host glycosylation is found at Asn579, Asn635, and Asn649. Hydrophobic membrane proximal region stretches follow at residues Ile694–Ser748 and Ala724–Ala744. Residues Phe751 to Phe771 form a helical membrane-spanning segment. At Lys772–Glu883 the chain is on the intravirion side. The disordered stretch occupies residues Pro791–Asp817. The segment covering Asp806–Asp817 has biased composition (acidic residues). The Internalization motif signature appears at Tyr868–Leu871.

It belongs to the herpesviridae glycoprotein B family. As to quaternary structure, homotrimer; disulfide-linked. Binds to heparan sulfate proteoglycans. Interacts with gH/gL heterodimer. Post-translationally, a proteolytic cleavage by host furin generates two subunits that remain linked by disulfide bonds.

The protein resides in the virion membrane. Its subcellular location is the host cell membrane. The protein localises to the host endosome membrane. It is found in the host Golgi apparatus membrane. Functionally, envelope glycoprotein that forms spikes at the surface of virion envelope. Essential for the initial attachment to heparan sulfate moieties of the host cell surface proteoglycans. Involved in fusion of viral and cellular membranes leading to virus entry into the host cell. Following initial binding to its host receptors, membrane fusion is mediated by the fusion machinery composed at least of gB and the heterodimer gH/gL. May be involved in the fusion between the virion envelope and the outer nuclear membrane during virion egress. The chain is Envelope glycoprotein B from Gallus gallus (Chicken).